Here is a 243-residue protein sequence, read N- to C-terminus: Ribosomal RNA small subunit methyltransferase J (243 aa).

S-adenosyl-L-methionine is bound by residues 112-113 and aspartate 164; that span reads ER.

The protein belongs to the methyltransferase superfamily. RsmJ family.

The protein resides in the cytoplasm. It carries out the reaction guanosine(1516) in 16S rRNA + S-adenosyl-L-methionine = N(2)-methylguanosine(1516) in 16S rRNA + S-adenosyl-L-homocysteine + H(+). Its function is as follows. Specifically methylates the guanosine in position 1516 of 16S rRNA. This Legionella pneumophila (strain Corby) protein is Ribosomal RNA small subunit methyltransferase J.